A 631-amino-acid polypeptide reads, in one-letter code: RING finger protein 112 (631 aa).

An RING-type zinc finger spans residues 57–98 (CSICLERLREPISLDCGHDFCIRCFSTHRIPGCELPCCPECR). The interval 131 to 631 (AVRAERLLLV…GDREPLLQEE (501 aa)) is interaction with ZBTB16. The GB1/RHD3-type G domain maps to 166–397 (DTPVCLLAVL…YISDVLSTAP (232 aa)). 317–318 (RD) is a GTP binding site. 2 consecutive transmembrane segments (helical) span residues 547 to 567 (LAAVGGAVGAGLMGLAGGVVG) and 580 to 600 (GMVAAGAAVGATGAAVVGGGV).

The protein belongs to the TRAFAC class dynamin-like GTPase superfamily. GB1/RHD3 GTPase family. GB1 subfamily. As to quaternary structure, self-associates. Interacts with SP1 in an oxidative stress-regulated manner. Interacts with SIGMAR1 in an oxidative stress-regulated manner. Interacts with ZBTB16 (via C2H2-type zinc finger domains 1 and 2). Auto-ubiquitinated. As to expression, predominantly expressed in brain.

The protein resides in the membrane. Its subcellular location is the cytoplasm. The protein localises to the nucleus. It localises to the nuclear body. It is found in the nucleoplasm. The protein resides in the endosome. Its subcellular location is the cytoplasmic vesicle. The protein localises to the secretory vesicle. It localises to the synaptic vesicle. It is found in the postsynaptic density. The protein resides in the perikaryon. Its subcellular location is the cell projection. The protein localises to the neuron projection. It carries out the reaction S-ubiquitinyl-[E2 ubiquitin-conjugating enzyme]-L-cysteine + [acceptor protein]-L-lysine = [E2 ubiquitin-conjugating enzyme]-L-cysteine + N(6)-ubiquitinyl-[acceptor protein]-L-lysine.. It functions in the pathway protein modification; protein ubiquitination. Its function is as follows. E3 ubiquitin-protein ligase that plays an important role in neuronal differentiation, including neurogenesis and gliogenesis, during brain development. During embryonic development initiates neuronal differentiation by inducing cell cycle arrest at the G0/G1 phase through up-regulation of cell-cycle regulatory proteins. Plays a role not only in the fetal period during the development of the nervous system, but also in the adult brain, where it is involved in the maintenance of neural functions and protection of the nervous tissue cells from oxidative stress-induced damage. Exhibits GTPase and E3 ubiquitin-protein ligase activities. Regulates dendritic spine density and synaptic neurotransmission; its ability to hydrolyze GTP is involved in the maintenance of dendritic spine density. The protein is RING finger protein 112 (Rnf112) of Rattus norvegicus (Rat).